The primary structure comprises 1206 residues: Cilia- and flagella-associated protein 157 (1206 aa).

Disordered stretches follow at residues 26 to 52 (GGGG…GRDL), 79 to 109 (RAEQ…QQAP), 125 to 173 (EATC…RGPL), and 327 to 405 (GSGK…EEDW). 3 stretches are compositionally biased toward low complexity: residues 88–109 (GRPQ…QQAP), 156–173 (AKAV…RGPL), and 385–397 (QQLG…QPGG). 3 coiled-coil regions span residues 634–732 (TDEL…KTKD), 799–833 (TEKL…LARR), and 876–903 (LHLA…KTAE). Disordered stretches follow at residues 936–990 (TTTN…DELS), 1011–1072 (LSHG…GATS), and 1168–1206 (PWGK…SLKV). Low complexity-rich tracts occupy residues 951-973 (AGAD…SSSA) and 1014-1035 (GPLS…ALAG). Composition is skewed to gly residues over residues 1037 to 1046 (WGPGSPGGSR) and 1058 to 1067 (SAGGMGGPQG). Composition is skewed to polar residues over residues 1175–1184 (QQPLTTTKHS) and 1193–1206 (GPSN…SLKV).

Belongs to the CFAP157 family.

It is found in the cell projection. The protein localises to the cilium. It localises to the flagellum. In Chlamydomonas reinhardtii (Chlamydomonas smithii), this protein is Cilia- and flagella-associated protein 157.